The sequence spans 199 residues: Inner membrane protein E199L (199 aa).

An N-linked (GlcNAc...) asparagine; by host glycan is attached at Asn-131. The helical transmembrane segment at 150-170 (INVMNHPFLTLILIILILVII) threads the bilayer.

This sequence belongs to the asfivirus E199L family. As to quaternary structure, interacts with host PYCR2; this interaction results in autophagy activation.

Its subcellular location is the virion membrane. The protein localises to the host membrane. In terms of biological role, essential for viral fusion with host endosomal membrane and core release. Not required for virus morphogenesis and egress. Induces complete autophagy through the interaction with and down-regulation of host PYCR2. This African swine fever virus (isolate Pig/Kenya/KEN-50/1950) (ASFV) protein is Inner membrane protein E199L.